Reading from the N-terminus, the 96-residue chain is uncharacterized protein (96 aa).

Positions 1–30 (MLILSVFCAVFYAFLTAIVANFSLKTLAIG) are cleaved as a signal peptide. At 31–54 (ATFVKSHLKSNPIPYGDLVADSLD) the chain is on the extracellular side. Residues 55-75 (FGNITPTVTLLFAILIAVLAL) traverse the membrane as a helical segment. Topologically, residues 76 to 96 (KCEFSCSTSAPAGQASGRKVK) are cytoplasmic.

Its subcellular location is the membrane. This is an uncharacterized protein from Dictyostelium discoideum (Social amoeba).